Reading from the N-terminus, the 311-residue chain is Pyrimidine-specific ribonucleoside hydrolase RihA (311 aa).

The active site involves histidine 240.

The protein belongs to the IUNH family. RihA subfamily.

In terms of biological role, hydrolyzes with equal efficiency cytidine or uridine to ribose and cytosine or uracil, respectively. The polypeptide is Pyrimidine-specific ribonucleoside hydrolase RihA (Escherichia coli O17:K52:H18 (strain UMN026 / ExPEC)).